The chain runs to 347 residues: MNIAPPLAITTDADLGPLNTFGLPARAARLLRVRGEEDVRALLAEPGWRGEPRLVLGGGSNLVLRGDFAGTVLKVEIAGRRLVGVREDADGAAWIVEAGAGECWHDFVRWTLAQGWPGLENLSLIPGTVGAAPIQNIGAYGVELTERFDALDAIDLDSGETRSFDRTTCAFGYRDSVFKRAAGRWLVLRVRFRLPQAWAPVGRYADVAAELAARGIAAPGAADISDAVIAIRRRKLPDPAKIGNAGSFFKNPVVDAAAWARLAAAHPEAPHYPQRDGSIKLAAGWLIEQAGWKGRNLGPVGCYERQALVLVNRGGACGEDVARLAAAIQADVEARFGIRLEPEPVFV.

Positions 23-197 (LPARAARLLR…LRVRFRLPQA (175 aa)) constitute an FAD-binding PCMH-type domain. Residue Arg-174 is part of the active site. Ser-247 serves as the catalytic Proton donor. Glu-343 is a catalytic residue.

The protein belongs to the MurB family. FAD serves as cofactor.

The protein resides in the cytoplasm. It catalyses the reaction UDP-N-acetyl-alpha-D-muramate + NADP(+) = UDP-N-acetyl-3-O-(1-carboxyvinyl)-alpha-D-glucosamine + NADPH + H(+). The protein operates within cell wall biogenesis; peptidoglycan biosynthesis. Functionally, cell wall formation. The chain is UDP-N-acetylenolpyruvoylglucosamine reductase from Azoarcus sp. (strain BH72).